A 98-amino-acid chain; its full sequence is uncharacterized protein (98 aa).

The region spanning 1-85 (MLETVPVRCV…GTLKQALENM (85 aa)) is the STAS domain.

In terms of processing, phosphorylated on threonine residue(s). Phosphorylated by PrkC and dephosphorylated by PrpC.

It is found in the cytoplasm. This is an uncharacterized protein from Bacillus subtilis (strain 168).